We begin with the raw amino-acid sequence, 267 residues long: Ribosomal RNA large subunit methyltransferase E (267 aa).

S-adenosyl-L-methionine contacts are provided by glycine 50, tryptophan 52, aspartate 68, aspartate 84, and aspartate 109. The Proton acceptor role is filled by lysine 149. Positions proline 196–glycine 255 constitute a TRAM domain.

This sequence belongs to the class I-like SAM-binding methyltransferase superfamily. RNA methyltransferase RlmE family.

The protein localises to the cytoplasm. It carries out the reaction uridine(2552) in 23S rRNA + S-adenosyl-L-methionine = 2'-O-methyluridine(2552) in 23S rRNA + S-adenosyl-L-homocysteine + H(+). Its function is as follows. Specifically methylates the uridine in position 2552 of 23S rRNA at the 2'-O position of the ribose in the fully assembled 50S ribosomal subunit. The chain is Ribosomal RNA large subunit methyltransferase E from Methanococcoides burtonii (strain DSM 6242 / NBRC 107633 / OCM 468 / ACE-M).